Here is a 426-residue protein sequence, read N- to C-terminus: Enolase (426 aa).

(2R)-2-phosphoglycerate is bound at residue Gln-163. Glu-205 (proton donor) is an active-site residue. Mg(2+) contacts are provided by Asp-242, Glu-285, and Asp-312. Positions 337, 366, 367, and 388 each coordinate (2R)-2-phosphoglycerate. The active-site Proton acceptor is the Lys-337.

This sequence belongs to the enolase family. Mg(2+) is required as a cofactor.

The protein resides in the cytoplasm. The protein localises to the secreted. It is found in the cell surface. The catalysed reaction is (2R)-2-phosphoglycerate = phosphoenolpyruvate + H2O. The protein operates within carbohydrate degradation; glycolysis; pyruvate from D-glyceraldehyde 3-phosphate: step 4/5. Catalyzes the reversible conversion of 2-phosphoglycerate (2-PG) into phosphoenolpyruvate (PEP). It is essential for the degradation of carbohydrates via glycolysis. The sequence is that of Enolase from Caulobacter vibrioides (strain ATCC 19089 / CIP 103742 / CB 15) (Caulobacter crescentus).